Reading from the N-terminus, the 395-residue chain is GPI-anchor transamidase (395 aa).

The first 27 residues, 1–27 (MAVTDSLSRAASTLAAVLLLSFGSVAA), serve as a signal peptide directing secretion. Topologically, residues 28–368 (SHIEDQAEQF…PKLKDWHPPG (341 aa)) are lumenal. Positions 79, 82, 118, and 120 each coordinate Ca(2+). The Proton donor role is filled by histidine 164. Cysteine 206 acts as the Nucleophile; acyl-thioester intermediate in catalysis. Positions 206, 232, and 234 each coordinate a protein. The tract at residues 231–236 (DSLSHQ) is autoinhibitory loop. Cysteine 275 and cysteine 280 form a disulfide bridge. A helical membrane pass occupies residues 369–385 (GFILGLWALIIMVFFKT). Residues 386–395 (YGIKHMKFIF) are Cytoplasmic-facing.

The protein belongs to the peptidase C13 family. In terms of assembly, heteropentamer. Part of the GPI-anchor transamidase complex, consisting of PIGK, PIGT, PIGS, PIGU and GAA1. Interacts with GPAA1. Interacts with PIGT; this interaction, via a disulfide link, stabilizes the expression of GAA1 and PIGK and links them to PIGS. The disulfide bond between PIGK/GPI8 and PIGT is important for normal enzyme activity.

The protein resides in the endoplasmic reticulum membrane. It participates in glycolipid biosynthesis; glycosylphosphatidylinositol-anchor biosynthesis. Its activity is regulated as follows. In the absence of proproteins substrates, exists in an inactive state with a disrupted catalytic site by an autoinhibitory loop. The binding of proprotein substrates, particularly the CSP region, to GPI-T triggers concerted conformational changes that alleviate the inhibition by the autoinhibitory loop. Meanwhile, proprotein residues near the omega- site induce the formation of a catalytic cleft for catalysis, following which the products are released and GPI-T reverts to the inactive state. Its function is as follows. Catalytic subunit of the glycosylphosphatidylinositol-anchor (GPI-anchor) transamidase (GPI-T) complex that catalyzes the formation of the linkage between a proprotein and a GPI-anchor and participates in GPI anchored protein biosynthesis. Recognizes diverse proproteins at a C-terminal signal peptide (CSP) region that lacks consensus sequence and replaces it with a GPI-anchor via a transamidation reaction. Transamidation catalysis reaction follows a two-phase mechanism. In the acyl-enzyme phase, the carbonyl group of the proproteins's omega-site undergoes a nucleophilic attack forming an enzyme-substrate thioester bond. Followed by a general acid catalysis that allows CSP releasing, regenerating the carbonyl, and forming the acyl-enzyme intermediate. In the GPI-anchor attachment phase, the amino group of the GPI-anchor's ethanolamine phosphate, the one on third mannose (EtNP3), mediates a nucleophilic attack on the carbonyl of the acyl-enzyme intermediate, replacing the CSP, allowing GPI-anchor attachment to the omega-residue, therefore forming the product and freeing the enzyme. This chain is GPI-anchor transamidase, found in Pongo abelii (Sumatran orangutan).